The following is a 224-amino-acid chain: Small ribosomal subunit protein uS3 (224 aa).

The KH type-2 domain maps to 38 to 106; the sequence is IRKFISEKLK…QVHINIVEIK (69 aa).

Belongs to the universal ribosomal protein uS3 family. In terms of assembly, part of the 30S ribosomal subunit. Forms a tight complex with proteins S10 and S14.

Functionally, binds the lower part of the 30S subunit head. Binds mRNA in the 70S ribosome, positioning it for translation. This chain is Small ribosomal subunit protein uS3, found in Lactobacillus acidophilus (strain ATCC 700396 / NCK56 / N2 / NCFM).